The sequence spans 216 residues: Thymidylate kinase (216 aa).

10 to 17 contacts ATP; it reads GPDGAGKS.

It belongs to the thymidylate kinase family.

The enzyme catalyses dTMP + ATP = dTDP + ADP. Functionally, phosphorylation of dTMP to form dTDP in both de novo and salvage pathways of dTTP synthesis. The sequence is that of Thymidylate kinase from Lactobacillus acidophilus (strain ATCC 700396 / NCK56 / N2 / NCFM).